The sequence spans 357 residues: Phenylalanine--tRNA ligase alpha subunit (357 aa).

E257 provides a ligand contact to Mg(2+).

It belongs to the class-II aminoacyl-tRNA synthetase family. Phe-tRNA synthetase alpha subunit type 1 subfamily. Tetramer of two alpha and two beta subunits. It depends on Mg(2+) as a cofactor.

Its subcellular location is the cytoplasm. The catalysed reaction is tRNA(Phe) + L-phenylalanine + ATP = L-phenylalanyl-tRNA(Phe) + AMP + diphosphate + H(+). This chain is Phenylalanine--tRNA ligase alpha subunit, found in Ruegeria pomeroyi (strain ATCC 700808 / DSM 15171 / DSS-3) (Silicibacter pomeroyi).